A 229-amino-acid chain; its full sequence is 2-C-methyl-D-erythritol 4-phosphate cytidylyltransferase (229 aa).

This sequence belongs to the IspD/TarI cytidylyltransferase family. IspD subfamily.

The catalysed reaction is 2-C-methyl-D-erythritol 4-phosphate + CTP + H(+) = 4-CDP-2-C-methyl-D-erythritol + diphosphate. It functions in the pathway isoprenoid biosynthesis; isopentenyl diphosphate biosynthesis via DXP pathway; isopentenyl diphosphate from 1-deoxy-D-xylulose 5-phosphate: step 2/6. In terms of biological role, catalyzes the formation of 4-diphosphocytidyl-2-C-methyl-D-erythritol from CTP and 2-C-methyl-D-erythritol 4-phosphate (MEP). The polypeptide is 2-C-methyl-D-erythritol 4-phosphate cytidylyltransferase (Neisseria meningitidis serogroup C (strain 053442)).